Here is a 218-residue protein sequence, read N- to C-terminus: Translation initiation factor 6 (218 aa).

This sequence belongs to the eIF-6 family.

Functionally, binds to the 50S ribosomal subunit and prevents its association with the 30S ribosomal subunit to form the 70S initiation complex. In Methanosarcina acetivorans (strain ATCC 35395 / DSM 2834 / JCM 12185 / C2A), this protein is Translation initiation factor 6.